Reading from the N-terminus, the 153-residue chain is Pheromone-binding protein Gp-9 (153 aa).

Positions 1–19 (MKTFVLHIFIFALVAFASA) are cleaved as a signal peptide. 3 disulfides stabilise this stretch: Cys-37–Cys-77, Cys-73–Cys-129, and Cys-118–Cys-138.

The protein belongs to the PBP/GOBP family. As to quaternary structure, homodimer.

Its subcellular location is the secreted. Functionally, colony queen number, a major feature of social organization, is associated with worker genotype for Gp-9. Colonies are headed by either a single reproductive queen (monogyne form) or multiple queens (polygyne form). Differences in worker Gp-9 genotypes between social forms may cause differences in workers' abilities to recognize queens and regulate their numbers. The sequence is that of Pheromone-binding protein Gp-9 from Solenopsis richteri (Black imported fire ant).